We begin with the raw amino-acid sequence, 500 residues long: Histidine--tRNA ligase (500 aa).

The protein belongs to the class-II aminoacyl-tRNA synthetase family. In terms of assembly, homodimer.

The protein localises to the cytoplasm. It catalyses the reaction tRNA(His) + L-histidine + ATP = L-histidyl-tRNA(His) + AMP + diphosphate + H(+). The sequence is that of Histidine--tRNA ligase from Ruegeria sp. (strain TM1040) (Silicibacter sp.).